We begin with the raw amino-acid sequence, 581 residues long: Arginine--tRNA ligase (581 aa).

A 'HIGH' region motif is present at residues 126–136; sequence PNLAKEMHVGH.

It belongs to the class-I aminoacyl-tRNA synthetase family. In terms of assembly, monomer.

It is found in the cytoplasm. It catalyses the reaction tRNA(Arg) + L-arginine + ATP = L-arginyl-tRNA(Arg) + AMP + diphosphate. This Shewanella halifaxensis (strain HAW-EB4) protein is Arginine--tRNA ligase.